A 77-amino-acid polypeptide reads, in one-letter code: U10-lycotoxin-Ls1a (77 aa).

Positions 1-20 (MKLIIFTGLVLFAIVSLIEA) are cleaved as a signal peptide. Residues 21-26 (EEESGR) constitute a propeptide that is removed on maturation.

This sequence belongs to the neurotoxin 19 (CSTX) family. 09 (U10-Lctx) subfamily. Contains 4 disulfide bonds. Expressed by the venom gland.

It localises to the secreted. The chain is U10-lycotoxin-Ls1a from Lycosa singoriensis (Wolf spider).